The chain runs to 380 residues: Protein phosphatase methylesterase 1 (380 aa).

The disordered stretch occupies residues 1–38; sequence MSALEKSMHLGRLPSRPPLPGSGGSQSGAKMRMGPGRK. Serine 15 is subject to Phosphoserine. The residue at position 16 (arginine 16) is an Asymmetric dimethylarginine; alternate. The residue at position 16 (arginine 16) is an Omega-N-methylarginine; alternate. The residue at position 42 (serine 42) is a Phosphoserine. Catalysis depends on residues serine 156 and aspartate 181. The span at 255–265 shows a compositional bias: acidic residues; it reads IEEEEEDEEGS. The interval 255–280 is disordered; that stretch reads IEEEEEDEEGSESVNKRKKEDDMETK. Residues 268 to 280 show a composition bias toward basic and acidic residues; that stretch reads VNKRKKEDDMETK. Residue histidine 349 is part of the active site.

The protein belongs to the AB hydrolase superfamily. As to quaternary structure, binds PPP2CA and PPP2CB. In terms of processing, phosphorylated by SIK1 following increases in intracellular sodium, leading to dissociation from the protein phosphatase 2A (PP2A) complex and subsequent dephosphorylation of sodium/potassium-transporting ATPase ATP1A1.

It carries out the reaction [phosphatase 2A protein]-C-terminal L-leucine methyl ester + H2O = [phosphatase 2A protein]-C-terminal L-leucine + methanol + H(+). Functionally, demethylates proteins that have been reversibly carboxymethylated. Demethylates PPP2CB (in vitro) and PPP2CA. Binding to PPP2CA displaces the manganese ion and inactivates the enzyme. The chain is Protein phosphatase methylesterase 1 (PPME1) from Bos taurus (Bovine).